The sequence spans 508 residues: Photosystem II CP47 reaction center protein (508 aa).

6 consecutive transmembrane segments (helical) span residues 21–36 (SVHI…WAGS), 101–115 (IVFS…IWHW), 140–156 (GIHL…FGAF), 203–218 (IAAG…FHLS), 237–252 (VLSS…AFVV), and 457–472 (SFAL…HGAR).

This sequence belongs to the PsbB/PsbC family. PsbB subfamily. PSII is composed of 1 copy each of membrane proteins PsbA, PsbB, PsbC, PsbD, PsbE, PsbF, PsbH, PsbI, PsbJ, PsbK, PsbL, PsbM, PsbT, PsbX, PsbY, PsbZ, Psb30/Ycf12, at least 3 peripheral proteins of the oxygen-evolving complex and a large number of cofactors. It forms dimeric complexes. Binds multiple chlorophylls. PSII binds additional chlorophylls, carotenoids and specific lipids. serves as cofactor.

It is found in the plastid. It localises to the chloroplast thylakoid membrane. In terms of biological role, one of the components of the core complex of photosystem II (PSII). It binds chlorophyll and helps catalyze the primary light-induced photochemical processes of PSII. PSII is a light-driven water:plastoquinone oxidoreductase, using light energy to abstract electrons from H(2)O, generating O(2) and a proton gradient subsequently used for ATP formation. In Olimarabidopsis pumila (Dwarf rocket), this protein is Photosystem II CP47 reaction center protein.